Reading from the N-terminus, the 516-residue chain is Coiled-coil domain-containing protein 82 (516 aa).

The span at 1 to 13 (MVHARRHETRKNS) shows a compositional bias: basic residues. Residues 1–265 (MVHARRHETR…DYGDAENEDD (265 aa)) are disordered. Positions 38–62 (DSDEELDSDEEIGSDEDLDGGESID) are enriched in acidic residues. Over residues 78-96 (IPEKETELNLIKVESERSN) the composition is skewed to basic and acidic residues. A compositionally biased stretch (polar residues) spans 98–107 (KCHMNTSSSS). Over residues 113-135 (MNKTKHNDLPDDEAHPGQAEGHH) the composition is skewed to basic and acidic residues. S170 and S194 each carry phosphoserine. The residue at position 202 (T202) is a Phosphothreonine. Residues 204–232 (EKSPAARKREYHQKLQELCERSRQKQRHN) adopt a coiled-coil conformation. Residues 215 to 226 (HQKLQELCERSR) are compositionally biased toward basic and acidic residues. Positions 248-265 (TDEDEDDDDYGDAENEDD) are enriched in acidic residues. Position 301 is a phosphoserine (S301).

The protein is Coiled-coil domain-containing protein 82 (Ccdc82) of Rattus norvegicus (Rat).